The chain runs to 491 residues: Aspartyl/glutamyl-tRNA(Asn/Gln) amidotransferase subunit B (491 aa).

Belongs to the GatB/GatE family. GatB subfamily. Heterotrimer of A, B and C subunits.

It carries out the reaction L-glutamyl-tRNA(Gln) + L-glutamine + ATP + H2O = L-glutaminyl-tRNA(Gln) + L-glutamate + ADP + phosphate + H(+). The enzyme catalyses L-aspartyl-tRNA(Asn) + L-glutamine + ATP + H2O = L-asparaginyl-tRNA(Asn) + L-glutamate + ADP + phosphate + 2 H(+). Allows the formation of correctly charged Asn-tRNA(Asn) or Gln-tRNA(Gln) through the transamidation of misacylated Asp-tRNA(Asn) or Glu-tRNA(Gln) in organisms which lack either or both of asparaginyl-tRNA or glutaminyl-tRNA synthetases. The reaction takes place in the presence of glutamine and ATP through an activated phospho-Asp-tRNA(Asn) or phospho-Glu-tRNA(Gln). This Paraburkholderia phymatum (strain DSM 17167 / CIP 108236 / LMG 21445 / STM815) (Burkholderia phymatum) protein is Aspartyl/glutamyl-tRNA(Asn/Gln) amidotransferase subunit B.